The following is a 417-amino-acid chain: Probable medium-chain specific acyl-CoA dehydrogenase 10, mitochondrial (417 aa).

The transit peptide at 1-15 (MLSRIATSSLGLSRS) directs the protein to the mitochondrion. FAD is bound by residues 148 to 157 (YCVTEPGAGS) and 181 to 183 (WIT). Substrate is bound at residue serine 157. 268-271 (DMTR) provides a ligand contact to substrate. Residues 306–307 (HQ) and 364–368 (QIFGG) contribute to the FAD site. The Proton acceptor role is filled by glutamate 391. Glycine 392 is a substrate binding site. 393-395 (TSQ) contributes to the FAD binding site.

This sequence belongs to the acyl-CoA dehydrogenase family. As to quaternary structure, homotetramer. It depends on FAD as a cofactor. As to expression, expressed in the epidermis and intestine.

The protein resides in the mitochondrion matrix. It carries out the reaction a medium-chain 2,3-saturated fatty acyl-CoA + oxidized [electron-transfer flavoprotein] + H(+) = a medium-chain (2E)-enoyl-CoA + reduced [electron-transfer flavoprotein]. It functions in the pathway lipid metabolism; mitochondrial fatty acid beta-oxidation. Its function is as follows. This enzyme is specific for acyl chain lengths of 4 to 16. In Caenorhabditis elegans, this protein is Probable medium-chain specific acyl-CoA dehydrogenase 10, mitochondrial (acdh-10).